The primary structure comprises 132 residues: D-ribose pyranase (132 aa).

Histidine 20 serves as the catalytic Proton donor. Residues aspartate 28, histidine 98, and 121 to 123 (YSN) each bind substrate.

The protein belongs to the RbsD / FucU family. RbsD subfamily. In terms of assembly, homodecamer.

The protein resides in the cytoplasm. It carries out the reaction beta-D-ribopyranose = beta-D-ribofuranose. It functions in the pathway carbohydrate metabolism; D-ribose degradation; D-ribose 5-phosphate from beta-D-ribopyranose: step 1/2. Catalyzes the interconversion of beta-pyran and beta-furan forms of D-ribose. The sequence is that of D-ribose pyranase from Kosmotoga olearia (strain ATCC BAA-1733 / DSM 21960 / TBF 19.5.1).